We begin with the raw amino-acid sequence, 341 residues long: Ferrochelatase (341 aa).

Fe cation is bound by residues His189 and Glu293.

Belongs to the ferrochelatase family.

The protein resides in the cytoplasm. The enzyme catalyses heme b + 2 H(+) = protoporphyrin IX + Fe(2+). It functions in the pathway porphyrin-containing compound metabolism; protoheme biosynthesis; protoheme from protoporphyrin-IX: step 1/1. Functionally, catalyzes the ferrous insertion into protoporphyrin IX. This Stutzerimonas stutzeri (strain A1501) (Pseudomonas stutzeri) protein is Ferrochelatase.